Consider the following 422-residue polypeptide: Ornithine decarboxylase (422 aa).

Lys71 is modified (N6-(pyridoxal phosphate)lysine). Residues Ser203, Gly240, and 275 to 278 each bind pyridoxal 5'-phosphate; that span reads EPGR. 331–332 provides a ligand contact to substrate; that stretch reads FD. Catalysis depends on Cys359, which acts as the Proton donor; shared with dimeric partner. Asp360 contributes to the substrate binding site. Tyr388 serves as a coordination point for pyridoxal 5'-phosphate.

Belongs to the Orn/Lys/Arg decarboxylase class-II family. As to quaternary structure, homodimer. Only the dimer is catalytically active, as the active sites are constructed of residues from both monomers. Pyridoxal 5'-phosphate is required as a cofactor.

It carries out the reaction L-ornithine + H(+) = putrescine + CO2. It participates in amine and polyamine biosynthesis; putrescine biosynthesis via L-ornithine pathway; putrescine from L-ornithine: step 1/1. Its activity is regulated as follows. Inhibited by antizyme (AZ) in response to polyamine levels. AZ inhibits the assembly of the functional homodimer by binding to ODC monomers and targeting them for ubiquitin-independent proteolytic destruction by the 26S proteasome. Catalyzes the first and rate-limiting step of polyamine biosynthesis that converts ornithine into putrescine, which is the precursor for the polyamines, spermidine and spermine. Polyamines are essential for cell proliferation and are implicated in cellular processes, ranging from DNA replication to apoptosis. The protein is Ornithine decarboxylase of Caenorhabditis elegans.